The following is a 367-amino-acid chain: Phosphoribosylaminoimidazole-succinocarboxamide synthase (367 aa).

Belongs to the SAICAR synthetase family.

It carries out the reaction 5-amino-1-(5-phospho-D-ribosyl)imidazole-4-carboxylate + L-aspartate + ATP = (2S)-2-[5-amino-1-(5-phospho-beta-D-ribosyl)imidazole-4-carboxamido]succinate + ADP + phosphate + 2 H(+). Its pathway is purine metabolism; IMP biosynthesis via de novo pathway; 5-amino-1-(5-phospho-D-ribosyl)imidazole-4-carboxamide from 5-amino-1-(5-phospho-D-ribosyl)imidazole-4-carboxylate: step 1/2. The chain is Phosphoribosylaminoimidazole-succinocarboxamide synthase from Vibrio campbellii (strain ATCC BAA-1116).